The sequence spans 365 residues: DNA replication and repair protein RecF (365 aa).

Residue 30-37 coordinates ATP; sequence GRNAQGKT.

The protein belongs to the RecF family.

It is found in the cytoplasm. The RecF protein is involved in DNA metabolism; it is required for DNA replication and normal SOS inducibility. RecF binds preferentially to single-stranded, linear DNA. It also seems to bind ATP. This chain is DNA replication and repair protein RecF, found in Streptococcus pneumoniae serotype 4 (strain ATCC BAA-334 / TIGR4).